The primary structure comprises 232 residues: Ribonuclease 3 (232 aa).

The RNase III domain occupies 7–135 (IQAVESKLKF…ILGAVYLDGG (129 aa)). Mg(2+) is bound at residue Glu48. Residue Asp52 is part of the active site. Asn121 and Glu124 together coordinate Mg(2+). Residue Glu124 is part of the active site. A DRBM domain is found at 160-229 (NPKNRLQQFT…AKQALSTHDD (70 aa)).

The protein belongs to the ribonuclease III family. As to quaternary structure, homodimer. Mg(2+) is required as a cofactor.

The protein resides in the cytoplasm. It catalyses the reaction Endonucleolytic cleavage to 5'-phosphomonoester.. Digests double-stranded RNA. Involved in the processing of primary rRNA transcript to yield the immediate precursors to the large and small rRNAs (23S and 16S). Processes some mRNAs, and tRNAs when they are encoded in the rRNA operon. Processes pre-crRNA and tracrRNA of type II CRISPR loci if present in the organism. The protein is Ribonuclease 3 of Chlamydia muridarum (strain MoPn / Nigg).